The primary structure comprises 586 residues: Arginine--tRNA ligase (586 aa).

The short motif at 133-143 (ANPTGPLNIVS) is the 'HIGH' region element.

It belongs to the class-I aminoacyl-tRNA synthetase family. In terms of assembly, monomer.

It localises to the cytoplasm. It carries out the reaction tRNA(Arg) + L-arginine + ATP = L-arginyl-tRNA(Arg) + AMP + diphosphate. The sequence is that of Arginine--tRNA ligase from Leptospira interrogans serogroup Icterohaemorrhagiae serovar Lai (strain 56601).